The following is a 420-amino-acid chain: Probable 3-isopropylmalate dehydratase large subunit (420 aa).

[4Fe-4S] cluster contacts are provided by cysteine 301, cysteine 361, and cysteine 364.

The protein belongs to the aconitase/IPM isomerase family. LeuC type 2 subfamily. In terms of assembly, heterodimer of LeuC and LeuD. It depends on [4Fe-4S] cluster as a cofactor.

The enzyme catalyses (2R,3S)-3-isopropylmalate = (2S)-2-isopropylmalate. The protein operates within amino-acid biosynthesis; L-leucine biosynthesis; L-leucine from 3-methyl-2-oxobutanoate: step 2/4. In terms of biological role, catalyzes the isomerization between 2-isopropylmalate and 3-isopropylmalate, via the formation of 2-isopropylmaleate. The polypeptide is Probable 3-isopropylmalate dehydratase large subunit (Methanosarcina mazei (strain ATCC BAA-159 / DSM 3647 / Goe1 / Go1 / JCM 11833 / OCM 88) (Methanosarcina frisia)).